The primary structure comprises 555 residues: Glucose-6-phosphate isomerase (555 aa).

The Proton donor role is filled by Glu365. Catalysis depends on residues His396 and Lys522.

It belongs to the GPI family.

Its subcellular location is the cytoplasm. It catalyses the reaction alpha-D-glucose 6-phosphate = beta-D-fructose 6-phosphate. Its pathway is carbohydrate biosynthesis; gluconeogenesis. The protein operates within carbohydrate degradation; glycolysis; D-glyceraldehyde 3-phosphate and glycerone phosphate from D-glucose: step 2/4. In terms of biological role, catalyzes the reversible isomerization of glucose-6-phosphate to fructose-6-phosphate. This Psychrobacter cryohalolentis (strain ATCC BAA-1226 / DSM 17306 / VKM B-2378 / K5) protein is Glucose-6-phosphate isomerase.